We begin with the raw amino-acid sequence, 302 residues long: Taste receptor type 2 member 104 (302 aa).

Over 1–7 the chain is Extracellular; it reads MLSALES. A helical transmembrane segment spans residues 8–28; it reads ILLSVATSEAMLGVLGNTFIV. Residues 29-43 are Cytoplasmic-facing; it reads LVNYTDWVRNKKLSK. A helical membrane pass occupies residues 44–64; the sequence is INFILTGLAISRIFTIWIITL. The Extracellular portion of the chain corresponds to 65 to 87; it reads DAYTKVFLLTMLMPSSLHECMSY. The helical transmembrane segment at 88-108 threads the bilayer; sequence IWVIINHLSVWFSTSLGIFYF. Topologically, residues 109–128 are cytoplasmic; sequence LKIANFSHYIFLWMKRRADK. Residues 129-149 form a helical membrane-spanning segment; it reads VFVFLIVFLIITWLASFPLAV. Topologically, residues 150–182 are extracellular; it reads KVIKDVKIYQSNTSWLIHLEKSELLINYVFANM. N-linked (GlcNAc...) asparagine glycosylation occurs at N161. A helical transmembrane segment spans residues 183 to 203; the sequence is GPISLFIVAIIACFLLTISLW. At 204-229 the chain is on the cytoplasmic side; the sequence is RHSRQMQSIGSGFRDLNTEAHMKAMK. Residues 230–250 form a helical membrane-spanning segment; sequence VLIAFIILFILYFLGILIETL. Over 251-259 the chain is Extracellular; sequence CLFLTNNKL. A helical transmembrane segment spans residues 260–280; the sequence is LFIFGFTLSAMYPCCHSFILI. Over 281-302 the chain is Cytoplasmic; it reads LTSRELKQATMRALQRLKCCET.

It belongs to the G-protein coupled receptor T2R family.

It localises to the membrane. In terms of biological role, putative taste receptor which may play a role in the perception of bitterness. The protein is Taste receptor type 2 member 104 of Mus musculus (Mouse).